The sequence spans 332 residues: mRNA-decapping enzyme 1 (332 aa).

Positions 141-173 are enriched in low complexity; that stretch reads ARAAKAASEAPQASVPAPTQAPAAPAQAPQMAP. The tract at residues 141-175 is disordered; sequence ARAAKAASEAPQASVPAPTQAPAAPAQAPQMAPQA.

This sequence belongs to the DCP1 family. As to quaternary structure, may be a component of the decapping complex composed of dcap-1 and dcap-2. Expressed in neurons including touch receptor neurons and motor neurons.

Its subcellular location is the cytoplasm. It is found in the cytoplasmic granule. Component of the decapping complex necessary for the degradation of mRNAs, both in normal mRNA turnover and in nonsense-mediated mRNA decay. In contrast to orthologs, does not possess decapping activity and does not remove the 7-methyl guanine cap structure from mRNA molecules. In the nervous system, negatively regulates the expression of insulin-like peptide ins-7, which in turn promotes longevity. This may in part be through promoting the activity of daf-16 in distal tissues. Required for the developmental axon guidance and regrowth of PLM touch receptor neurons. In ADL sensory neurons, plays a role in ciliary shape formation. Acts in neurons to promote larval survival at high temperatures by negatively regulating lin-14 expression. In Caenorhabditis elegans, this protein is mRNA-decapping enzyme 1.